Reading from the N-terminus, the 631-residue chain is Dolichyl-diphosphooligosaccharide--protein glycosyltransferase subunit 2 (631 aa).

An N-terminal signal peptide occupies residues 1–22; it reads MAPPGSSAVFLLALTITASVQA. Topologically, residues 23 to 540 are lumenal; sequence LTPTHYLTKQ…REPEKRPPTV (518 aa). An N-linked (GlcNAc...) asparagine glycan is attached at Asn-106. Residue Lys-154 forms a Glycyl lysine isopeptide (Lys-Gly) (interchain with G-Cter in ubiquitin) linkage. Residues 541 to 561 form a helical membrane-spanning segment; the sequence is VSNTFTALILSPLLLLFALWI. Topologically, residues 562–571 are cytoplasmic; the sequence is RIGANVSNFT. Residues 572–592 form a helical membrane-spanning segment; the sequence is FAPSTVIFHLGHAAMLGLMYI. The Lumenal segment spans residues 593–596; the sequence is YWTQ. A helical transmembrane segment spans residues 597 to 617; that stretch reads LNMFQTLKYLAVLGTVTFLAG. The Cytoplasmic portion of the chain corresponds to 618-631; the sequence is NRMLAQHAVKRTAH.

It belongs to the SWP1 family. Component of the oligosaccharyltransferase (OST) complex. OST exists in two different complex forms which contain common core subunits RPN1, RPN2, OST48, OST4, DAD1 and TMEM258, either STT3A or STT3B as catalytic subunits, and form-specific accessory subunits. STT3A complex assembly occurs through the formation of 3 subcomplexes. Subcomplex 1 contains RPN1 and TMEM258, subcomplex 2 contains the STT3A-specific subunits STT3A, DC2/OSTC, and KCP2 as well as the core subunit OST4, and subcomplex 3 contains RPN2, DAD1, and OST48. The STT3A complex can form stable complexes with the Sec61 complex or with both the Sec61 and TRAP complexes. Interacts with DDI2. Interacts with TMEM35A/NACHO.

It is found in the endoplasmic reticulum. The protein localises to the endoplasmic reticulum membrane. It functions in the pathway protein modification; protein glycosylation. Functionally, subunit of the oligosaccharyl transferase (OST) complex that catalyzes the initial transfer of a defined glycan (Glc(3)Man(9)GlcNAc(2) in eukaryotes) from the lipid carrier dolichol-pyrophosphate to an asparagine residue within an Asn-X-Ser/Thr consensus motif in nascent polypeptide chains, the first step in protein N-glycosylation. N-glycosylation occurs cotranslationally and the complex associates with the Sec61 complex at the channel-forming translocon complex that mediates protein translocation across the endoplasmic reticulum (ER). All subunits are required for a maximal enzyme activity. The sequence is that of Dolichyl-diphosphooligosaccharide--protein glycosyltransferase subunit 2 from Mus musculus (Mouse).